We begin with the raw amino-acid sequence, 271 residues long: Meiotic drive suppressor wtf35 (271 aa).

Disordered stretches follow at residues 1–24 (MKNNYTSLKSPLDEEDELKTDHEI) and 54–75 (TVPEDSSTGPTETANPNVERRQ). The span at 57–69 (EDSSTGPTETANP) shows a compositional bias: polar residues. Transmembrane regions (helical) follow at residues 90–110 (LLISVLAVSVVFFTAWVCVNP), 120–140 (AFSVTIGITCPILFIAIFCFF), 176–196 (WENMPMAFSEVFLFNILVGSP), and 213–233 (SLAEHITFVVLSILVFIAETV).

This sequence belongs to the WTF family. Homomer. Interacts with other proteins that exhibit high sequence similarity.

The protein localises to the spore membrane. Its subcellular location is the vacuole membrane. In terms of biological role, acts as a suppressor component of the dual wtf meiotic drive system, and can suppress but not confer meiotic drive by compatible poisons. Wtf meiotic drive systems promote unequal transmission of alleles from the parental zygote to progeny spores by encoding a poison and an antidote from the same locus; the poison is trans-acting and forms toxic aggregates in all spores within an ascus, wherease the antidote is spore-specific and targets aggregates for degradation by the vacuole. Meiotic drive by wtf systems therefore lead to poisoning of all progeny that do not inherit the dual poison/antidote allele, or express a compatible antidote. In Schizosaccharomyces kambucha (Fission yeast), this protein is Meiotic drive suppressor wtf35.